The chain runs to 144 residues: MESPLGSDLARLVRVWRALIDHRLKPLELTQTHWITLHNICQLPPEQSQIQLAKAIGIEQPSLVRTLDQLEEKGLITRHTCANDRRAKRIKLTESAEPIIKEVNNVIDSTRNEILNGISQEEIQLLSNMIAKLEKNILELYNKS.

Residues 2-135 (ESPLGSDLAR…LSNMIAKLEK (134 aa)) enclose the HTH marR-type domain. Positions 49–72 (QIQLAKAIGIEQPSLVRTLDQLEE) form a DNA-binding region, H-T-H motif.

This sequence belongs to the SlyA family. Homodimer.

Its function is as follows. Transcription regulator that can specifically activate or repress expression of target genes. The chain is Transcriptional regulator SlyA from Sodalis glossinidius (strain morsitans).